A 430-amino-acid polypeptide reads, in one-letter code: Adenylosuccinate synthetase (430 aa).

Residues glycine 12–lysine 18 and glycine 40–threonine 42 contribute to the GTP site. The active-site Proton acceptor is aspartate 13. Residues aspartate 13 and glycine 40 each coordinate Mg(2+). IMP is bound by residues aspartate 13–lysine 16, asparagine 38–histidine 41, threonine 128, arginine 142, glutamine 223, threonine 238, and arginine 302. The Proton donor role is filled by histidine 41. Threonine 298–arginine 304 contacts substrate. GTP-binding positions include arginine 304, leucine 330 to aspartate 332, and serine 412 to glycine 414.

The protein belongs to the adenylosuccinate synthetase family. In terms of assembly, homodimer. The cofactor is Mg(2+).

It is found in the cytoplasm. The enzyme catalyses IMP + L-aspartate + GTP = N(6)-(1,2-dicarboxyethyl)-AMP + GDP + phosphate + 2 H(+). It participates in purine metabolism; AMP biosynthesis via de novo pathway; AMP from IMP: step 1/2. Plays an important role in the de novo pathway of purine nucleotide biosynthesis. Catalyzes the first committed step in the biosynthesis of AMP from IMP. The chain is Adenylosuccinate synthetase from Listeria monocytogenes serovar 1/2a (strain ATCC BAA-679 / EGD-e).